The following is a 193-amino-acid chain: Adenylate kinase (193 aa).

Position 11 to 16 (11 to 16 (GSGKGT)) interacts with ATP. Positions 31 to 60 (STGDIFRANVKGETPLGLEAKKYMDAGDYV) are NMP. Residues Thr32, Arg37, 58–60 (DYV), 86–89 (GYPR), and Gln93 contribute to the AMP site. An LID region spans residues 127-137 (GRAKESGRSDD). Arg128 lines the ATP pocket. Residues Arg134 and Arg145 each contribute to the AMP site. Gly173 provides a ligand contact to ATP.

The protein belongs to the adenylate kinase family. Monomer.

The protein localises to the cytoplasm. The catalysed reaction is AMP + ATP = 2 ADP. It participates in purine metabolism; AMP biosynthesis via salvage pathway; AMP from ADP: step 1/1. Functionally, catalyzes the reversible transfer of the terminal phosphate group between ATP and AMP. Plays an important role in cellular energy homeostasis and in adenine nucleotide metabolism. The polypeptide is Adenylate kinase (Renibacterium salmoninarum (strain ATCC 33209 / DSM 20767 / JCM 11484 / NBRC 15589 / NCIMB 2235)).